A 125-amino-acid chain; its full sequence is Large ribosomal subunit protein bL20 (125 aa).

This sequence belongs to the bacterial ribosomal protein bL20 family.

Its function is as follows. Binds directly to 23S ribosomal RNA and is necessary for the in vitro assembly process of the 50S ribosomal subunit. It is not involved in the protein synthesizing functions of that subunit. In Rhizorhabdus wittichii (strain DSM 6014 / CCUG 31198 / JCM 15750 / NBRC 105917 / EY 4224 / RW1) (Sphingomonas wittichii), this protein is Large ribosomal subunit protein bL20.